The following is a 325-amino-acid chain: Anthranilate phosphoribosyltransferase (325 aa).

5-phospho-alpha-D-ribose 1-diphosphate contacts are provided by residues Gly-74, 77–78 (GD), Thr-82, 84–87 (NVST), 101–109 (KHGNVSITS), and Ser-113. Residue Gly-74 coordinates anthranilate. Ser-86 lines the Mg(2+) pocket. Residue Asn-104 participates in anthranilate binding. An anthranilate-binding site is contributed by Arg-159. The Mg(2+) site is built by Asp-217 and Glu-218.

It belongs to the anthranilate phosphoribosyltransferase family. In terms of assembly, homodimer. Mg(2+) is required as a cofactor.

It catalyses the reaction N-(5-phospho-beta-D-ribosyl)anthranilate + diphosphate = 5-phospho-alpha-D-ribose 1-diphosphate + anthranilate. The protein operates within amino-acid biosynthesis; L-tryptophan biosynthesis; L-tryptophan from chorismate: step 2/5. Its function is as follows. Catalyzes the transfer of the phosphoribosyl group of 5-phosphorylribose-1-pyrophosphate (PRPP) to anthranilate to yield N-(5'-phosphoribosyl)-anthranilate (PRA). This chain is Anthranilate phosphoribosyltransferase, found in Thermococcus kodakarensis (strain ATCC BAA-918 / JCM 12380 / KOD1) (Pyrococcus kodakaraensis (strain KOD1)).